A 117-amino-acid polypeptide reads, in one-letter code: Protein SMALL AUXIN UP-REGULATED RNA 54 (117 aa).

The protein belongs to the ARG7 family. As to expression, expressed in trichomes. Hardly observed in leaves.

The protein localises to the cell membrane. In terms of biological role, provide a mechanistic link between auxin and plasma membrane H(+)-ATPases (PM H(+)-ATPases, e.g. AHA1 and AHA2), and triggers PM H(+)-ATPases activity by promoting phosphorylation of their C-terminal autoinhibitory domain as a result of PP2C-D subfamily of type 2C phosphatases inhibition, thus leading to the acidification of the apoplast and the facilitation of solutes and water uptake to drive cell expansion. Triggers plant growth probably by promoting cell elongation. Regulates branch angles and bending. The polypeptide is Protein SMALL AUXIN UP-REGULATED RNA 54 (Arabidopsis thaliana (Mouse-ear cress)).